Reading from the N-terminus, the 545-residue chain is CTP synthase (545 aa).

Positions 1–266 (MTTNYIFVTG…DDYICKRFSL (266 aa)) are amidoligase domain. Ser-14 provides a ligand contact to CTP. Residue Ser-14 coordinates UTP. ATP-binding positions include 15-20 (SLGKGI) and Asp-72. Residues Asp-72 and Glu-140 each contribute to the Mg(2+) site. Residues 147–149 (DIE), 187–192 (KTKPTQ), and Lys-223 each bind CTP. Residues 187–192 (KTKPTQ) and Lys-223 contribute to the UTP site. 239-241 (KDV) lines the ATP pocket. The region spanning 291 to 542 (TIGMVGKYIE…VKAASEFQKR (252 aa)) is the Glutamine amidotransferase type-1 domain. Gly-352 provides a ligand contact to L-glutamine. Catalysis depends on Cys-379, which acts as the Nucleophile; for glutamine hydrolysis. L-glutamine-binding positions include 380-383 (LGMQ), Glu-403, and Arg-470. Active-site residues include His-515 and Glu-517.

It belongs to the CTP synthase family. Homotetramer.

The enzyme catalyses UTP + L-glutamine + ATP + H2O = CTP + L-glutamate + ADP + phosphate + 2 H(+). It catalyses the reaction L-glutamine + H2O = L-glutamate + NH4(+). It carries out the reaction UTP + NH4(+) + ATP = CTP + ADP + phosphate + 2 H(+). The protein operates within pyrimidine metabolism; CTP biosynthesis via de novo pathway; CTP from UDP: step 2/2. Allosterically activated by GTP, when glutamine is the substrate; GTP has no effect on the reaction when ammonia is the substrate. The allosteric effector GTP functions by stabilizing the protein conformation that binds the tetrahedral intermediate(s) formed during glutamine hydrolysis. Inhibited by the product CTP, via allosteric rather than competitive inhibition. Its function is as follows. Catalyzes the ATP-dependent amination of UTP to CTP with either L-glutamine or ammonia as the source of nitrogen. Regulates intracellular CTP levels through interactions with the four ribonucleotide triphosphates. This chain is CTP synthase, found in Escherichia coli O127:H6 (strain E2348/69 / EPEC).